The following is a 160-amino-acid chain: Phosphopantetheine adenylyltransferase (160 aa).

Threonine 10 is a binding site for substrate. ATP-binding positions include 10–11 (TF) and histidine 18. Positions 42, 74, and 88 each coordinate substrate. Residues 89 to 91 (GVR), glutamate 99, and 124 to 130 (WSYISST) contribute to the ATP site.

The protein belongs to the bacterial CoaD family. As to quaternary structure, homohexamer. Requires Mg(2+) as cofactor.

It localises to the cytoplasm. It carries out the reaction (R)-4'-phosphopantetheine + ATP + H(+) = 3'-dephospho-CoA + diphosphate. The protein operates within cofactor biosynthesis; coenzyme A biosynthesis; CoA from (R)-pantothenate: step 4/5. Functionally, reversibly transfers an adenylyl group from ATP to 4'-phosphopantetheine, yielding dephospho-CoA (dPCoA) and pyrophosphate. The polypeptide is Phosphopantetheine adenylyltransferase (Sodalis glossinidius (strain morsitans)).